The chain runs to 217 residues: Uracil-DNA glycosylase (217 aa).

D62 serves as the catalytic Proton acceptor.

Belongs to the uracil-DNA glycosylase (UDG) superfamily. UNG family.

It localises to the cytoplasm. It carries out the reaction Hydrolyzes single-stranded DNA or mismatched double-stranded DNA and polynucleotides, releasing free uracil.. Excises uracil residues from the DNA which can arise as a result of misincorporation of dUMP residues by DNA polymerase or due to deamination of cytosine. This chain is Uracil-DNA glycosylase, found in Streptococcus pyogenes serotype M6 (strain ATCC BAA-946 / MGAS10394).